The following is a 2009-amino-acid chain: ADP-ribosylation factor guanine nucleotide-exchange factor SEC7 (2009 aa).

The interval 1–220 (MSEQNSVVNA…ISLSSNGSNT (220 aa)) is disordered. A compositionally biased stretch (polar residues) spans 17 to 33 (ISSNVETASSVNPSVKP). Over residues 37–53 (IKEEAKETNGEDQKCKG) the composition is skewed to basic and acidic residues. The segment covering 91-118 (EGEDGDEDEDEDEDEDEDNGDEDDEDVD) has biased composition (acidic residues). The segment covering 134 to 143 (SVSGESTESS) has biased composition (low complexity). Positions 144-154 (SGEDEESDESD) are enriched in acidic residues. Low complexity predominate over residues 155–165 (GNTSNSSSGDE). The segment covering 166 to 184 (SGSEEEEEEEEEEEEEENA) has biased composition (acidic residues). The segment covering 194 to 209 (SVPTNDSTAPRSTHTR) has biased composition (polar residues). Residues 210-220 (NISLSSNGSNT) show a composition bias toward low complexity. Phosphoserine occurs at positions 212 and 215. T334 bears the Phosphothreonine mark. A phosphoserine mark is found at S447, S452, and S455. The HUS box signature appears at 653–657 (NYDCN). Residues 771-788 (SSARQESRSSLSNDVRSS) show a composition bias toward low complexity. The interval 771 to 814 (SSARQESRSSLSNDVRSSIMTSNDDFKPTYEDEESRSLSSQNID) is disordered. K797 is covalently cross-linked (Glycyl lysine isopeptide (Lys-Gly) (interchain with G-Cter in ubiquitin)). A Phosphoserine modification is found at S807. Positions 824–1010 (LKLRKTALSE…LFNEIANNEI (187 aa)) constitute an SEC7 domain. D940 provides a ligand contact to Mg(2+). The tract at residues 1017 to 1220 (HQAMLSGDTN…QARVANPRVS (204 aa)) is HDS1 domain. The residue at position 1226 (S1226) is a Phosphoserine. Position 1240 is a phosphothreonine (T1240). Over residues 1708 to 1723 (GRKSSVSHHQTTNDTS) the composition is skewed to polar residues. A disordered region spans residues 1708–1803 (GRKSSVSHHQ…KKTKHMKRNE (96 aa)). The segment covering 1724 to 1751 (QHSDDDSNDRRENDSNISETVERAHQEE) has biased composition (basic and acidic residues). Phosphoserine is present on residues S1741 and S1752. Residues 1764-1777 (LNGQTKLNNGNSVP) are compositionally biased toward polar residues. Positions 1836–1883 (FENEDFAHCIPYKEAIRITRLLEKSYEFSRDFNEDYGLRTRLVEARVV) are C2 domain-interacting region (CIR).

As to quaternary structure, interacts with ARF1. Interacts (via C-terminus) with RSP5 ubiquitin ligase.

The protein localises to the cytoplasm. The protein resides in the golgi apparatus. It localises to the trans-Golgi network. It is found in the cytoplasmic vesicle. Its subcellular location is the COPI-coated vesicle membrane. The protein localises to the COPII-coated vesicle membrane. In terms of biological role, guanine exchange factor that acts as an activator of ARF1 at the trans-Golgi network and is thus involved in vesicular budding and traffic between compartments of the Golgi apparatus. Activation of Arf (ADP-ribosylation factor) GTPases is essential for vesicle formation via recruitment of cargo adapters and coat proteins necessary for Golgi trafficking. Also plays an essential role in ER-to-Golgi traffic. SEC7 also acts as an effector of two Rab GTPases, YPT1 and YPT31/32. The chain is ADP-ribosylation factor guanine nucleotide-exchange factor SEC7 from Saccharomyces cerevisiae (strain ATCC 204508 / S288c) (Baker's yeast).